Consider the following 181-residue polypeptide: ATP synthase subunit delta (181 aa).

This sequence belongs to the ATPase delta chain family. As to quaternary structure, F-type ATPases have 2 components, F(1) - the catalytic core - and F(0) - the membrane proton channel. F(1) has five subunits: alpha(3), beta(3), gamma(1), delta(1), epsilon(1). F(0) has three main subunits: a(1), b(2) and c(10-14). The alpha and beta chains form an alternating ring which encloses part of the gamma chain. F(1) is attached to F(0) by a central stalk formed by the gamma and epsilon chains, while a peripheral stalk is formed by the delta and b chains.

Its subcellular location is the cell membrane. Its function is as follows. F(1)F(0) ATP synthase produces ATP from ADP in the presence of a proton or sodium gradient. F-type ATPases consist of two structural domains, F(1) containing the extramembraneous catalytic core and F(0) containing the membrane proton channel, linked together by a central stalk and a peripheral stalk. During catalysis, ATP synthesis in the catalytic domain of F(1) is coupled via a rotary mechanism of the central stalk subunits to proton translocation. In terms of biological role, this protein is part of the stalk that links CF(0) to CF(1). It either transmits conformational changes from CF(0) to CF(1) or is implicated in proton conduction. The chain is ATP synthase subunit delta from Clostridium kluyveri (strain NBRC 12016).